Consider the following 147-residue polypeptide: Myoglobin (147 aa).

The region spanning 2–141 (ADFDAVLKCW…IIADLEANYK (140 aa)) is the Globin domain. A nitrite-binding site is contributed by histidine 60. Histidine 60 is a binding site for O2. Histidine 89 is a binding site for heme b.

The protein belongs to the globin family. In terms of assembly, monomeric.

The protein localises to the cytoplasm. It is found in the sarcoplasm. The enzyme catalyses Fe(III)-heme b-[protein] + nitric oxide + H2O = Fe(II)-heme b-[protein] + nitrite + 2 H(+). It carries out the reaction H2O2 + AH2 = A + 2 H2O. Monomeric heme protein which primary function is to store oxygen and facilitate its diffusion within muscle tissues. Reversibly binds oxygen through a pentacoordinated heme iron and enables its timely and efficient release as needed during periods of heightened demand. Depending on the oxidative conditions of tissues and cells, and in addition to its ability to bind oxygen, it also has a nitrite reductase activity whereby it regulates the production of bioactive nitric oxide. Under stress conditions, like hypoxia and anoxia, it also protects cells against reactive oxygen species thanks to its pseudoperoxidase activity. The polypeptide is Myoglobin (mb) (Thunnus alalunga (Albacore)).